A 289-amino-acid chain; its full sequence is Stress response regulator protein 1 (289 aa).

The disordered stretch occupies residues 77–136 (LDCTNSEMDEEDDFEDDEDDENLGLINPLHHKSSHGQISDYSPLTPFTEPPSASLSKPSF). Acidic residues predominate over residues 83–98 (EMDEEDDFEDDEDDEN). The segment covering 127-136 (PSASLSKPSF) has biased composition (polar residues). One can recognise a Response regulatory domain in the interval 163-281 (NFLIVDDNII…YDFVMDRIDE (119 aa)). Asp-214 is subject to 4-aspartylphosphate.

In terms of biological role, required for stress adaptation, morphogenesis and virulence. This Scheffersomyces stipitis (strain ATCC 58785 / CBS 6054 / NBRC 10063 / NRRL Y-11545) (Yeast) protein is Stress response regulator protein 1 (SRR1).